A 321-amino-acid chain; its full sequence is Putrescine export system permease protein SapB (321 aa).

Residues 1–8 (MIIFTLRR) lie on the Cytoplasmic side of the membrane. Residues 9–29 (ILLLIVTLFLLTFVGFSLSYF) traverse the membrane as a helical segment. At 30 to 80 (TPHAPLQGASLWNAWVFWFNGLIHWDFGVSSINGQPIAEQLKEVFPATMEL) the chain is on the periplasmic side. An ABC transmembrane type-1 domain is found at 74–302 (FPATMELCIL…SLVIIVNVIS (229 aa)). The helical transmembrane segment at 81-101 (CILAFGFALIVGIPVGMIAGI) threads the bilayer. The Cytoplasmic segment spans residues 102-112 (TRHKWQDNLIN). Residues 113–133 (AIALLGFSIPVFWLALLLTLF) traverse the membrane as a helical segment. The Periplasmic segment spans residues 134–174 (CSLTLGWLPVSGRFDLLYEVKPITGFALIDAWLSDSPWRDE). A helical membrane pass occupies residues 175–195 (MIMSAIRHMILPVITLSVAPT). Topologically, residues 196–248 (TEVIRLMRISTIEVYDQNYVKAAATRGLSRFTILRRHVLHNALPPVIPRLGLQ) are cytoplasmic. The chain crosses the membrane as a helical span at residues 249 to 269 (FSTMLTLAMITEMVFSWPGLG). Residues 270 to 280 (RWLINAIRQQD) lie on the Periplasmic side of the membrane. Residues 281–301 (YAAISAGVMVCGSLVIIVNVI) traverse the membrane as a helical segment. The Cytoplasmic portion of the chain corresponds to 302–321 (SDILGAMANPLKHKEWYALR).

The protein belongs to the binding-protein-dependent transport system permease family. OppBC subfamily.

Its subcellular location is the cell inner membrane. Functionally, part of a putrescine export transport system, does not play a role in resistance to antimicrobial peptides. This is Putrescine export system permease protein SapB (sapB) from Escherichia coli (strain K12).